Consider the following 290-residue polypeptide: Nucleoid occlusion protein (290 aa).

The segment at residues 153–172 is a DNA-binding region (H-T-H motif); that stretch reads EALAQRLGKGQSTVANKLRL.

The protein belongs to the ParB family.

The protein localises to the cytoplasm. It localises to the nucleoid. Functionally, effects nucleoid occlusion by binding relatively nonspecifically to DNA and preventing the assembly of the division machinery in the vicinity of the nucleoid, especially under conditions that disturb the cell cycle. It helps to coordinate cell division and chromosome segregation by preventing the formation of the Z ring through the nucleoid, which would cause chromosome breakage. The protein is Nucleoid occlusion protein of Bacillus mycoides (strain KBAB4) (Bacillus weihenstephanensis).